We begin with the raw amino-acid sequence, 256 residues long: DNA repair protein RecO (256 aa).

The protein belongs to the RecO family.

In terms of biological role, involved in DNA repair and RecF pathway recombination. The protein is DNA repair protein RecO of Rhizobium etli (strain ATCC 51251 / DSM 11541 / JCM 21823 / NBRC 15573 / CFN 42).